A 301-amino-acid chain; its full sequence is Probable alpha-L-glutamate ligase (301 aa).

The 184-residue stretch at 104–287 (LQLLSRRGIG…VAGMIIEYLE (184 aa)) folds into the ATP-grasp domain. Residues Lys-141, 178–179 (EY), Asp-187, and 211–213 (RSN) each bind ATP. Positions 248, 260, and 262 each coordinate Mg(2+). Positions 248, 260, and 262 each coordinate Mn(2+).

This sequence belongs to the RimK family. Mg(2+) serves as cofactor. The cofactor is Mn(2+).

This is Probable alpha-L-glutamate ligase from Pseudomonas savastanoi pv. phaseolicola (strain 1448A / Race 6) (Pseudomonas syringae pv. phaseolicola (strain 1448A / Race 6)).